The primary structure comprises 321 residues: Small ribosomal subunit protein mS43 (321 aa).

The transit peptide at 1-13 (MLRFTGARAIRKY) directs the protein to the mitochondrion.

The protein belongs to the mitochondrion-specific ribosomal protein mS43 family. Component of the mitochondrial small ribosomal subunit (mt-SSU). Mature yeast 74S mitochondrial ribosomes consist of a small (37S) and a large (54S) subunit. The 37S small subunit contains a 15S ribosomal RNA (15S mt-rRNA) and 34 different proteins. The 54S large subunit contains a 21S rRNA (21S mt-rRNA) and 46 different proteins. mS43 forms a heterodimer with mS42, building a large protuberance adjacent to the mRNA channel exit in the mt-SSU body.

The protein localises to the mitochondrion. Component of the mitochondrial ribosome (mitoribosome), a dedicated translation machinery responsible for the synthesis of mitochondrial genome-encoded proteins, including at least some of the essential transmembrane subunits of the mitochondrial respiratory chain. The mitoribosomes are attached to the mitochondrial inner membrane and translation products are cotranslationally integrated into the membrane. The polypeptide is Small ribosomal subunit protein mS43 (MRP1) (Saccharomyces cerevisiae (strain ATCC 204508 / S288c) (Baker's yeast)).